The sequence spans 179 residues: Large ribosomal subunit protein uL5 (179 aa).

The protein belongs to the universal ribosomal protein uL5 family. As to quaternary structure, part of the 50S ribosomal subunit; part of the 5S rRNA/L5/L18/L25 subcomplex. Contacts the 5S rRNA and the P site tRNA. Forms a bridge to the 30S subunit in the 70S ribosome.

Functionally, this is one of the proteins that bind and probably mediate the attachment of the 5S RNA into the large ribosomal subunit, where it forms part of the central protuberance. In the 70S ribosome it contacts protein S13 of the 30S subunit (bridge B1b), connecting the 2 subunits; this bridge is implicated in subunit movement. Contacts the P site tRNA; the 5S rRNA and some of its associated proteins might help stabilize positioning of ribosome-bound tRNAs. This chain is Large ribosomal subunit protein uL5, found in Prochlorococcus marinus (strain AS9601).